The sequence spans 801 residues: Phosphatidylinositol 4-kinase beta (801 aa).

Disordered stretches follow at residues 1–29, 101–121, and 250–304; these read MGDTAVEPAPLKPASEPAPGPPGNNGGSL, EDEMGATVTSGTAKGARRRRQ, and RKRE…EDEP. The residue at position 2 (Gly2) is an N-acetylglycine. The interval 2–68 is interaction with ACBD3; it reads GDTAVEPAPL…VRLLHGAVAV (67 aa). Positions 29 to 242 constitute a PIK helical domain; that stretch reads LLSVITEGVG…GTKLRKLILS (214 aa). Residue Ser258 is modified to Phosphoserine. The segment covering 259 to 268 has biased composition (polar residues); the sequence is PALNTGLSPS. Position 263 is a phosphothreonine (Thr263). Phosphoserine occurs at positions 266, 275, 277, 284, 294, and 413. Residues 278 to 294 show a composition bias toward low complexity; that stretch reads DATASISLSSSLKRTAS. A Phosphothreonine modification is found at Thr423. Phosphoserine is present on Ser496. Phosphothreonine is present on residues Thr502 and Thr504. The PI3K/PI4K catalytic domain maps to 520–786; that stretch reads EPWQEKVRRI…MVDGSMRSIT (267 aa). The tract at residues 526–532 is G-loop; the sequence is VRRIREG. The interval 653 to 661 is catalytic loop; it reads QVKDRHNGN. The interval 672–696 is activation loop; the sequence is HIDFGFILSSSPRNLGFETSAFKLT.

The protein belongs to the PI3/PI4-kinase family. Type III PI4K subfamily. As to quaternary structure, interacts with ARF1 and ARF3 in the Golgi complex, but not with ARF4, ARF5 or ARF6. Interacts with NCS1/FREQ in a calcium-independent manner. Interacts with CALN1/CABP8 and CALN2/CABP7; in a calcium-dependent manner; this interaction competes with NCS1/FREQ binding. Interacts with ACBD3. Interacts with ARMH3, YWHAB, YWHAE, YWHAG, YWHAH, YWHAQ, YWHAZ and SFN. Interacts with GGA2 (via VHS domain); the interaction is important for PI4KB location at the Golgi apparatus membrane. Interacts with ATG9A. It depends on Mg(2+) as a cofactor. Mn(2+) is required as a cofactor.

It is found in the endomembrane system. It localises to the mitochondrion outer membrane. The protein localises to the rough endoplasmic reticulum membrane. Its subcellular location is the golgi apparatus. The protein resides in the golgi apparatus membrane. It carries out the reaction a 1,2-diacyl-sn-glycero-3-phospho-(1D-myo-inositol) + ATP = a 1,2-diacyl-sn-glycero-3-phospho-(1D-myo-inositol 4-phosphate) + ADP + H(+). Inhibited by wortmannin. Increased kinase activity upon interaction with NCS1/FREQ. Functionally, phosphorylates phosphatidylinositol (PI) in the first committed step in the production of the second messenger inositol-1,4,5,-trisphosphate (PIP). May regulate Golgi disintegration/reorganization during mitosis, possibly via its phosphorylation. Involved in Golgi-to-plasma membrane trafficking. May play an important role in the inner ear development. The chain is Phosphatidylinositol 4-kinase beta (PI4KB) from Sorex araneus (Eurasian common shrew).